We begin with the raw amino-acid sequence, 361 residues long: Transcription factor Sox-18B (361 aa).

The segment at 17 to 65 (VNSTWVPPADTVPEASLTPHSPPAPDSPAPSPKPGYGYSACEEKPGDPR) is disordered. Positions 36–49 (HSPPAPDSPAPSPK) are enriched in pro residues. Positions 66–134 (IRRPMNAFMV…QHLQDHPNYK (69 aa)) form a DNA-binding region, HMG box. Interaction with DNA regions lie at residues 68–81 (RPMN…KDER) and 92–104 (HNAV…GQSW). A disordered region spans residues 127-163 (LQDHPNYKYRPRRKKQAKKLKRMDPSHHLRNEGYTGG). Basic residues predominate over residues 133 to 147 (YKYRPRRKKQAKKLK). Positions 147–208 (KRMDPSHHLR…VLEPSEPAFF (62 aa)) are important for transcriptional activation. The segment covering 148 to 157 (RMDPSHHLRN) has biased composition (basic and acidic residues). The 127-residue stretch at 234–360 (KTLREISLPY…TAMYYTPCIT (127 aa)) folds into the Sox C-terminal domain. The 9aaTAD signature appears at 306–314 (NEFDQYLNM).

In terms of tissue distribution, expressed in the adult spleen, lung, heart and kidney, and at a lower level in the adult testis, liver and brain.

It localises to the nucleus. Its function is as follows. Transcription factor. Binds to the consensus DNA sequence 5'-AACAAT-3'. Also binds 5'-CACAAT-3' and 5'-AATAAT-3' but with a lower affinity. Acts partially redundantly with sox7 during cardiogenesis, acting indirectly through nodal-signaling to induce mesodermal, organizer and endodermal tissues, which then interact to initiate cardiogenesis. Also acts as an antagonist of beta-catenin signaling. This Xenopus laevis (African clawed frog) protein is Transcription factor Sox-18B (sox18-b).